Reading from the N-terminus, the 392-residue chain is 1-deoxy-D-xylulose 5-phosphate reductoisomerase (392 aa).

NADPH contacts are provided by Thr-10, Gly-11, Ser-12, Ile-13, Arg-37, Gln-38, and Asn-124. Lys-125 is a binding site for 1-deoxy-D-xylulose 5-phosphate. Residue Glu-126 participates in NADPH binding. Asp-150 is a Mn(2+) binding site. Residues Ser-151, Glu-152, Ser-179, and His-202 each coordinate 1-deoxy-D-xylulose 5-phosphate. Glu-152 serves as a coordination point for Mn(2+). Position 208 (Gly-208) interacts with NADPH. 4 residues coordinate 1-deoxy-D-xylulose 5-phosphate: Ser-215, Asn-220, Lys-221, and Glu-224. Glu-224 is a Mn(2+) binding site.

It belongs to the DXR family. Requires Mg(2+) as cofactor. Mn(2+) is required as a cofactor.

It carries out the reaction 2-C-methyl-D-erythritol 4-phosphate + NADP(+) = 1-deoxy-D-xylulose 5-phosphate + NADPH + H(+). It participates in isoprenoid biosynthesis; isopentenyl diphosphate biosynthesis via DXP pathway; isopentenyl diphosphate from 1-deoxy-D-xylulose 5-phosphate: step 1/6. Functionally, catalyzes the NADPH-dependent rearrangement and reduction of 1-deoxy-D-xylulose-5-phosphate (DXP) to 2-C-methyl-D-erythritol 4-phosphate (MEP). This is 1-deoxy-D-xylulose 5-phosphate reductoisomerase from Cupriavidus metallidurans (strain ATCC 43123 / DSM 2839 / NBRC 102507 / CH34) (Ralstonia metallidurans).